The following is a 678-amino-acid chain: MTKNLLVELGLEELPAYVVTPSEKQLGEKMAAFLKENRLSFEAIQTFSTPRRLAVRVTGLSDKQSDLTEDFKGPAKKIALDSDGNFTKAAQGFVRGKGLTVEDIEFREIKGEEYVYVTKEEVGQAVEAIVPGVVDVLKSLTFPVSMHWAGNSFEYIRPVHTLTVLLDEQEFDLDFLDIKGSRVSRGHRFLGKETKIQSALSYEEDLRKQFVIADPCEREQMIVDQIKEIEAKHGVRIEIDADLLNEVLNLVEYPTAFMGSFDAKYLEVPEEVLVTSMKEHQRYFVVRDQDGKLLPNFISVRNGNAERLKNVIKGNEKVLVARLEDGEFFWREDQKLVISDLVEKLNNVTFHEKIGSLREHMIRTGQITVLLAEKAGLSVDETVDLARAAAIYKFDLLTGMVGEFDELQGIMGEKYTLLAGETPAVAAAIREHYMPTSAEGELPESKVGAVLAIADKLDTILSFFSVGLIPSGSNDPYALRRATQGVVRILDAFGWHIAMDELIDSLYALKFDSLTYENKAEVMDFIKARVDKMMGSTPKDIKEAVLAGSNFVVADMLEAASALVEVSKEEDFKPSVESLSRAFNLAEKAEGVATVDSALFENDQEKALAEAVETLVLSGPASQQLKQLFALSPVIDAFFENTMVMAEDQAVRQNRLAILSQLTKKAAKFACFNQINTK.

This sequence belongs to the class-II aminoacyl-tRNA synthetase family. As to quaternary structure, tetramer of two alpha and two beta subunits.

The protein localises to the cytoplasm. The enzyme catalyses tRNA(Gly) + glycine + ATP = glycyl-tRNA(Gly) + AMP + diphosphate. The sequence is that of Glycine--tRNA ligase beta subunit from Streptococcus pneumoniae serotype 19F (strain G54).